The primary structure comprises 369 residues: Uroporphyrinogen decarboxylase (369 aa).

Residues 1–26 (MPVLHVDARPGSGPGGVSPPPSGAAL) are disordered. Substrate-binding positions include 56 to 60 (RQAGR), aspartate 105, tyrosine 180, serine 235, and histidine 348.

This sequence belongs to the uroporphyrinogen decarboxylase family. Homodimer.

It is found in the cytoplasm. The catalysed reaction is uroporphyrinogen III + 4 H(+) = coproporphyrinogen III + 4 CO2. It participates in porphyrin-containing compound metabolism; protoporphyrin-IX biosynthesis; coproporphyrinogen-III from 5-aminolevulinate: step 4/4. Catalyzes the decarboxylation of four acetate groups of uroporphyrinogen-III to yield coproporphyrinogen-III. This Frankia casuarinae (strain DSM 45818 / CECT 9043 / HFP020203 / CcI3) protein is Uroporphyrinogen decarboxylase.